A 97-amino-acid polypeptide reads, in one-letter code: Citrate lyase acyl carrier protein (97 aa).

Position 14 is an O-(phosphoribosyl dephospho-coenzyme A)serine (Ser-14).

Belongs to the CitD family. Oligomer with a subunit composition of (alpha,beta,gamma)6.

The protein resides in the cytoplasm. Functionally, covalent carrier of the coenzyme of citrate lyase. This Escherichia fergusonii (strain ATCC 35469 / DSM 13698 / CCUG 18766 / IAM 14443 / JCM 21226 / LMG 7866 / NBRC 102419 / NCTC 12128 / CDC 0568-73) protein is Citrate lyase acyl carrier protein.